The sequence spans 150 residues: MQVILLEKVINLGNLGDIVKVKDGYARNFLIPSKKARRATQTAIAEFEVKRAELEKAAAEKLAAAQAEGEKLNGLNVQITQKSGVDGRLFGSVTNADIAEALAGQGYKLEKSQVRLPNGPLKMVGDHPVSVALHTDVVVDVTVSVVGESV.

Belongs to the bacterial ribosomal protein bL9 family.

Functionally, binds to the 23S rRNA. This is Large ribosomal subunit protein bL9 from Cupriavidus taiwanensis (strain DSM 17343 / BCRC 17206 / CCUG 44338 / CIP 107171 / LMG 19424 / R1) (Ralstonia taiwanensis (strain LMG 19424)).